The sequence spans 244 residues: Nicotinamidase 1 (244 aa).

It belongs to the isochorismatase family. In terms of tissue distribution, expressed in roots and stems, and at lower levels in flowers, siliques and leaves.

The catalysed reaction is nicotinamide + H2O = nicotinate + NH4(+). The protein operates within cofactor biosynthesis; nicotinate biosynthesis; nicotinate from nicotinamide: step 1/1. Functionally, catalyzes the deamidation of nicotinamide, an early step in the NAD(+) salvage pathway. Prevents the accumulation of intracellular nicotinamide, a known inhibitor of poly(ADP-ribose) polymerases (PARP enzymes). This Arabidopsis thaliana (Mouse-ear cress) protein is Nicotinamidase 1.